The primary structure comprises 490 residues: Probable cytochrome P450 308a1 (490 aa).

C431 is a heme binding site.

This sequence belongs to the cytochrome P450 family. Heme serves as cofactor.

It localises to the endoplasmic reticulum membrane. It is found in the microsome membrane. Its function is as follows. May be involved in the metabolism of insect hormones and in the breakdown of synthetic insecticides. The polypeptide is Probable cytochrome P450 308a1 (Cyp308a1) (Drosophila melanogaster (Fruit fly)).